Reading from the N-terminus, the 341-residue chain is L-amino acid-D/L-Glu epimerase (341 aa).

Substrate contacts are provided by residues threonine 132 and 157–159 (KIK). 3 residues coordinate Mg(2+): aspartate 186, glutamate 212, and aspartate 237. Residues lysine 261 and 315–317 (DLD) contribute to the substrate site.

This sequence belongs to the mandelate racemase/muconate lactonizing enzyme family. It depends on Mg(2+) as a cofactor.

Catalyzes the epimerization of dipeptides with L-Glu in the second position. Has epimerase activity with L-Gly-L-Glu, L-Ala-L-Glu, L-Ser-L-Glu, L-Pro-L-Glu, L-Val-L-Glu, L-Met-L-Glu, L-Thr-L-Glu and L-Phe-L-Glu (in vitro). This is L-amino acid-D/L-Glu epimerase from Sulfurimonas denitrificans (strain ATCC 33889 / DSM 1251) (Thiomicrospira denitrificans (strain ATCC 33889 / DSM 1251)).